The primary structure comprises 234 residues: Inner membrane protein YbhL (234 aa).

Residues 1–23 (MDRFPRSDSIVQPRAGLQTYMAQ) lie on the Periplasmic side of the membrane. A helical membrane pass occupies residues 24-44 (VYGWMTVGLLLTAFVAWYAAN). Topologically, residues 45–56 (SAAVMELLFTNR) are cytoplasmic. A helical transmembrane segment spans residues 57–77 (VFLIGLIIAQLALVIVLSAMI). The Periplasmic portion of the chain corresponds to 78–79 (QK). Residues 80 to 100 (LSAGVTTMLFMLYSALTGLTL) traverse the membrane as a helical segment. Residues 101–102 (SS) lie on the Cytoplasmic side of the membrane. A helical transmembrane segment spans residues 103–123 (IFIVYTAASIASTFVVTAGMF). Topologically, residues 124-136 (GAMSLYGYTTKRD) are periplasmic. Residues 137 to 157 (LSGFGNMLFMALIGIVLASLV) form a helical membrane-spanning segment. Residues 158-163 (NFWLKS) lie on the Cytoplasmic side of the membrane. A helical transmembrane segment spans residues 164 to 184 (EALMWAVTYIGVIVFVGLTAY). The Periplasmic segment spans residues 185–206 (DTQKLKNMGEQIDTRDTSNLRK). A helical transmembrane segment spans residues 207 to 227 (YSILGALTLYLDFINLFLMLL). The Cytoplasmic segment spans residues 228–234 (RIFGNRR).

This sequence belongs to the BI1 family.

It is found in the cell inner membrane. This is Inner membrane protein YbhL (ybhL) from Escherichia coli (strain K12).